A 97-amino-acid chain; its full sequence is Co-chaperonin GroES (97 aa).

This sequence belongs to the GroES chaperonin family. Heptamer of 7 subunits arranged in a ring. Interacts with the chaperonin GroEL.

It localises to the cytoplasm. In terms of biological role, together with the chaperonin GroEL, plays an essential role in assisting protein folding. The GroEL-GroES system forms a nano-cage that allows encapsulation of the non-native substrate proteins and provides a physical environment optimized to promote and accelerate protein folding. GroES binds to the apical surface of the GroEL ring, thereby capping the opening of the GroEL channel. The chain is Co-chaperonin GroES from Serratia proteamaculans (strain 568).